Reading from the N-terminus, the 456-residue chain is Gamma-aminobutyric acid receptor subunit alpha-1 (456 aa).

Residues 1 to 27 (MRKSPGLSDYLWAWILLLSTLTGRSYG) form the signal peptide. The Extracellular segment spans residues 28-253 (QPSLQDELKD…FHLKRKIGYF (226 aa)). Residue N38 is glycosylated (N-linked (GlcNAc...) asparagine). Residue R94 participates in 4-aminobutanoate binding. N138 carries N-linked (GlcNAc...) asparagine glycosylation. T157 is a 4-aminobutanoate binding site. An intrachain disulfide couples C166 to C180. The helical transmembrane segment at 254-274 (VIQTYLPCIMTVILSQVSFWL) threads the bilayer. The Cytoplasmic segment spans residues 275-279 (NRESV). A helical membrane pass occupies residues 280–301 (PARTVFGVTTVLTMTTLSISAR). Over 302–311 (NSLPKVAYAT) the chain is Extracellular. The chain crosses the membrane as a helical span at residues 312 to 333 (AMDWFIAVCYAFVFSALIEFAT). The Cytoplasmic segment spans residues 334 to 421 (VNYFTKRGYA…TFNSVSKIDR (88 aa)). Residues 422 to 441 (LSRIAFPLLFGIFNLVYWAT) form a helical membrane-spanning segment. Residues 442–456 (YLNREPQLKAPTPHQ) are Extracellular-facing.

The protein belongs to the ligand-gated ion channel (TC 1.A.9) family. Gamma-aminobutyric acid receptor (TC 1.A.9.5) subfamily. GABRA1 sub-subfamily. As to quaternary structure, heteropentamer, formed by a combination of alpha (GABRA1-6), beta (GABRB1-3), gamma (GABRG1-3), delta (GABRD), epsilon (GABRE), rho (GABRR1-3), pi (GABRP) and theta (GABRQ) subunits, each subunit exhibiting distinct physiological and pharmacological properties. Interacts with UBQLN1. Interacts with TRAK1. Interacts with KIF21B. Identified in a complex of 720 kDa composed of LHFPL4, NLGN2, GABRA1, GABRB2, GABRG2 and GABRB3. Interacts with LHFPL4. Interacts with NLGN2. Interacts with SHISA7; interaction leads to the regulation of GABA(A) receptor trafficking, channel deactivation kinetics and pharmacology.

It is found in the postsynaptic cell membrane. The protein localises to the cell membrane. It localises to the cytoplasmic vesicle membrane. It carries out the reaction chloride(in) = chloride(out). With respect to regulation, allosterically activated by benzodiazepines, the neuroanesthetic alphaxalone and pentobarbital. Inhibited by the antagonist bicuculline. Potentiated by histamine. Functionally, alpha subunit of the heteropentameric ligand-gated chloride channel gated by gamma-aminobutyric acid (GABA), a major inhibitory neurotransmitter in the brain. GABA-gated chloride channels, also named GABA(A) receptors (GABAAR), consist of five subunits arranged around a central pore and contain GABA active binding site(s) located at the alpha and beta subunit interface(s). When activated by GABA, GABAARs selectively allow the flow of chloride anions across the cell membrane down their electrochemical gradient. Alpha-1/GABRA1-containing GABAARs are largely synaptic. Chloride influx into the postsynaptic neuron following GABAAR opening decreases the neuron ability to generate a new action potential, thereby reducing nerve transmission. GABAARs containing alpha-1 and beta-2 or -3 subunits exhibit synaptogenic activity; the gamma-2 subunit being necessary but not sufficient to induce rapid synaptic contacts formation. GABAARs function also as histamine receptor where histamine binds at the interface of two neighboring beta subunits and potentiates GABA response. GABAARs containing alpha, beta and epsilon subunits also permit spontaneous chloride channel activity while preserving the structural information required for GABA-gated openings. Alpha-1-mediated plasticity in the orbitofrontal cortex regulates context-dependent action selection. Together with rho subunits, may also control neuronal and glial GABAergic transmission in the cerebellum. The chain is Gamma-aminobutyric acid receptor subunit alpha-1 (GABRA1) from Macaca fascicularis (Crab-eating macaque).